A 213-amino-acid polypeptide reads, in one-letter code: mRNA-decapping protein OPG121 (213 aa).

2 residues coordinate N(7)-methyl-GTP: E16 and R50. The Nudix hydrolase domain occupies 30 to 209 (KDTHVFAACI…EYLSYIYNIL (180 aa)). The short motif at 111–132 (GKLDKKESIKDCLRRELKEESD) is the Nudix box element. Mg(2+) contacts are provided by E126 and E130. D151 provides a ligand contact to N(7)-methyl-GTP. Residue E183 participates in Mg(2+) binding.

Belongs to the Nudix hydrolase family. In terms of assembly, interacts with the late transcription elongation factor VLTF-4/OPG110. Interacts with the late transcription factors VLTF-1. Mg(2+) serves as cofactor. It depends on Mn(2+) as a cofactor.

The enzyme catalyses a 5'-end (N(7)-methyl 5'-triphosphoguanosine)-guanosine in mRNA + H2O = a 5'-end phospho-guanosine in mRNA + N(7)-methyl-GDP + 2 H(+). In terms of biological role, acts with RNA polymerase to initiate transcription from late gene promoters. This is mRNA-decapping protein OPG121 (OPG121) from Cynomys gunnisoni (Gunnison's prairie dog).